We begin with the raw amino-acid sequence, 374 residues long: DNA primase small subunit PriS (374 aa).

Active-site residues include D99, D101, and D281.

The protein belongs to the eukaryotic-type primase small subunit family. In terms of assembly, heterodimer of a small subunit (PriS) and a large subunit (PriL). Mg(2+) serves as cofactor. Requires Mn(2+) as cofactor.

Its function is as follows. Catalytic subunit of DNA primase, an RNA polymerase that catalyzes the synthesis of short RNA molecules used as primers for DNA polymerase during DNA replication. The small subunit contains the primase catalytic core and has DNA synthesis activity on its own. Binding to the large subunit stabilizes and modulates the activity, increasing the rate of DNA synthesis while decreasing the length of the DNA fragments, and conferring RNA synthesis capability. The DNA polymerase activity may enable DNA primase to also catalyze primer extension after primer synthesis. May also play a role in DNA repair. This is DNA primase small subunit PriS from Methanoregula boonei (strain DSM 21154 / JCM 14090 / 6A8).